A 461-amino-acid polypeptide reads, in one-letter code: L-seryl-tRNA(Sec) selenium transferase (461 aa).

An N6-(pyridoxal phosphate)lysine modification is found at K294.

Belongs to the SelA family. The cofactor is pyridoxal 5'-phosphate.

Its subcellular location is the cytoplasm. The catalysed reaction is L-seryl-tRNA(Sec) + selenophosphate + H(+) = L-selenocysteinyl-tRNA(Sec) + phosphate. It participates in aminoacyl-tRNA biosynthesis; selenocysteinyl-tRNA(Sec) biosynthesis; selenocysteinyl-tRNA(Sec) from L-seryl-tRNA(Sec) (bacterial route): step 1/1. In terms of biological role, converts seryl-tRNA(Sec) to selenocysteinyl-tRNA(Sec) required for selenoprotein biosynthesis. The polypeptide is L-seryl-tRNA(Sec) selenium transferase (Actinobacillus pleuropneumoniae serotype 5b (strain L20)).